The sequence spans 351 residues: Amylovoran biosynthesis glycosyltransferase AmsD (351 aa).

The protein belongs to the glycosyltransferase group 1 family. Glycosyltransferase 4 subfamily.

It functions in the pathway glycan metabolism; exopolysaccharide biosynthesis. Functionally, involved in the biosynthesis of amylovoran which functions as a virulence factor. May be involved in the formation of galactose alpha-1,6 linkages in amylovoran. This is Amylovoran biosynthesis glycosyltransferase AmsD (amsD) from Erwinia amylovora (Fire blight bacteria).